A 130-amino-acid polypeptide reads, in one-letter code: Small ribosomal subunit protein uS8 (130 aa).

Belongs to the universal ribosomal protein uS8 family.

The polypeptide is Small ribosomal subunit protein uS8 (RPS15A) (Strongylocentrotus purpuratus (Purple sea urchin)).